Here is a 995-residue protein sequence, read N- to C-terminus: tRNA wybutosine-synthesizing protein 2/3/4 (995 aa).

The interval 1–212 is tRNA wybutosine-synthesizing protein 3 homolog; that stretch reads MDFEKRKAAT…GFSVALASNG (212 aa). Kelch repeat units lie at residues 284–335, 336–386, 387–436, 437–486, and 488–535; these read EVIV…MVGD, FMFV…SVGT, KVYI…AYGS, QSFM…VYKH, and IGII…SILG. Residues 661-995 are tRNA wybutosine-synthesizing protein 2 homolog; sequence ERSEENNLTK…RHLVADVRCR (335 aa). S-adenosyl-L-methionine is bound by residues lysine 828 and 896–897; that span reads DN.

It in the C-terminal section; belongs to the class I-like SAM-binding methyltransferase superfamily. TRM5/TYW2 family. This sequence in the N-terminal section; belongs to the TYW3 family.

The enzyme catalyses 4-demethyl-7-[(3S)-3-amino-3-carboxypropyl]wyosine(37) in tRNA(Phe) + S-adenosyl-L-methionine = 7-[(3S)-3-amino-3-carboxypropyl]wyosine(37) in tRNA(Phe) + S-adenosyl-L-homocysteine + H(+). It carries out the reaction 4-demethylwyosine(37) in tRNA(Phe) + S-adenosyl-L-methionine = 4-demethyl-7-[(3S)-3-amino-3-carboxypropyl]wyosine(37) in tRNA(Phe) + S-methyl-5'-thioadenosine + H(+). It participates in tRNA modification; wybutosine-tRNA(Phe) biosynthesis. S-adenosyl-L-methionine-dependent transferase that acts as a component of the wybutosine biosynthesis pathway. Wybutosine is a hyper modified guanosine with a tricyclic base found at the 3'-position adjacent to the anticodon of eukaryotic phenylalanine tRNA. This chain is tRNA wybutosine-synthesizing protein 2/3/4, found in Arabidopsis thaliana (Mouse-ear cress).